We begin with the raw amino-acid sequence, 320 residues long: Cytochrome c biogenesis protein CcsA (320 aa).

A run of 7 helical transmembrane segments spans residues 13–33, 46–66, 73–93, 147–167, 226–246, 259–274, and 289–309; these read ISFS…FLLV, GMIV…IYSG, LYES…VSYL, MVLG…LLVI, IISL…VWAN, ETWA…IYFH, and VASM…LLGI.

Belongs to the CcmF/CycK/Ccl1/NrfE/CcsA family. As to quaternary structure, may interact with Ccs1.

Its subcellular location is the plastid. It localises to the chloroplast thylakoid membrane. Its function is as follows. Required during biogenesis of c-type cytochromes (cytochrome c6 and cytochrome f) at the step of heme attachment. The polypeptide is Cytochrome c biogenesis protein CcsA (Gossypium barbadense (Sea Island cotton)).